We begin with the raw amino-acid sequence, 322 residues long: MSGRLPFSQSFWEEFLMGREGHLPVLPELSHVSKGVIRILGGNPGSMHLQGTNTYLVGTGRSRILIDTAQGLPAWINRISSFLSTQKIELSYVLLTHWHGDHTGGVPDLIARNSSLANKIYKNQPDSGQSPITHGQIFSVDGATVRAILTPGHSVDHMCFLLEEENALFTGDNVLGHGFSVAQDLGRYMDSLRDMASLGCRIGYPAHGAMIENLPGKLEEYIQHREGRERMMLSALTRHRVRGEGTRDERVKYGLTLNEIVLAVYGRLPQEVIEKALAPSLLQVLWKLTEDRMVGFKPGDPLKRQWFALEQRQRNKVRGCRG.

Residues H97, H99, D101, and H102 each coordinate Zn(2+). D101 serves as the catalytic Proton donor/acceptor.

This sequence belongs to the metallo-beta-lactamase superfamily. Zn(2+) serves as cofactor.

It participates in secondary metabolite biosynthesis. In terms of biological role, lactamase-like protein; part of the gene cluster that mediates the biosynthesis of neosartoricin B, a prenylated anthracenone that probably exhibits T-cell antiproliferative activity, suggestive of a physiological role as an immunosuppressive agent. The non-reducing polyketide synthase nscA probably synthesizes and cyclizes the decaketide backbone. The hydrolase nscB then mediates the product release through hydrolysis followed by spontaneous decarboxylation. The prenyltransferase nscD catalyzes the addition of the dimethylallyl group to the aromatic C5. The FAD-dependent monooxygenase nscC is then responsible for the stereospecific hydroxylation at C2. Neosartoricin B can be converted into two additional compounds neosartoricins C and D. Neosartoricin C is a spirocyclic compound that is cyclized through the attack of C3 hydroxyl on C14, followed by dehydration. On the other hand, neosartoricin D is a further cyclized compound in which attack of C2 on C14 in neosartoricin C results in the formation of the acetal-containing dioxabicyclo-octanone ring. Both of these compounds are novel and possibly represent related metabolites of the gene cluster. This is Lactamase-like protein nscB from Trichophyton rubrum (strain ATCC MYA-4607 / CBS 118892) (Athlete's foot fungus).